A 171-amino-acid polypeptide reads, in one-letter code: Ribosome-binding factor A (171 aa).

Over residues 120-132 the composition is skewed to low complexity; it reads AALAAAAQPAGDP. The tract at residues 120–171 is disordered; sequence AALAAAAQPAGDPDPYKKPVDHTDDWDEDDEDDRDGDDAVDALDAAADVPRL. Basic and acidic residues predominate over residues 133 to 142; that stretch reads DPYKKPVDHT. The span at 143–160 shows a compositional bias: acidic residues; it reads DDWDEDDEDDRDGDDAVD. Residues 161–171 are compositionally biased toward low complexity; the sequence is ALDAAADVPRL.

Belongs to the RbfA family. As to quaternary structure, monomer. Binds 30S ribosomal subunits, but not 50S ribosomal subunits or 70S ribosomes.

Its subcellular location is the cytoplasm. Functionally, one of several proteins that assist in the late maturation steps of the functional core of the 30S ribosomal subunit. Associates with free 30S ribosomal subunits (but not with 30S subunits that are part of 70S ribosomes or polysomes). Required for efficient processing of 16S rRNA. May interact with the 5'-terminal helix region of 16S rRNA. The polypeptide is Ribosome-binding factor A (Kineococcus radiotolerans (strain ATCC BAA-149 / DSM 14245 / SRS30216)).